A 405-amino-acid polypeptide reads, in one-letter code: Alpha-N-acetylgalactosaminidase (405 aa).

3 cysteine pairs are disulfide-bonded: Cys21-Cys63, Cys25-Cys32, and Cys111-Cys142. Residues 61–62 (DD) and Lys138 contribute to the substrate site. Asp140 functions as the Nucleophile in the catalytic mechanism. Asn161 carries N-linked (GlcNAc...) asparagine glycosylation. Cys171 and Cys193 are joined by a disulfide. Substrate is bound at residue Ser172. Residue Asn185 is glycosylated (N-linked (GlcNAc...) asparagine). Positions 197 and 201 each coordinate substrate. The active-site Proton donor is the Asp201. A glycan (N-linked (GlcNAc...) asparagine) is linked at Asn369.

This sequence belongs to the glycosyl hydrolase 27 family. As to quaternary structure, homodimer.

The protein resides in the lysosome. It carries out the reaction Cleavage of non-reducing alpha-(1-&gt;3)-N-acetylgalactosamine residues from human blood group A and AB mucin glycoproteins, Forssman hapten and blood group A lacto series glycolipids.. The catalysed reaction is a neolactoside IV(3)-alpha-GalNAc,IV(2)-alpha-Fuc-nLc4Cer(d18:1(4E)) + H2O = a neolactoside IV(2)-alpha-Fuc-nLc4Cer(d18:1(4E)) + N-acetyl-alpha-D-galactosamine. It catalyses the reaction a neolactoside IV(3)-alpha-GalNAc,IV(2)-alpha-Fuc-nLc4Cer(d18:0) + H2O = a neolactoside IV(2)-alpha-Fuc-nLc4Cer(d18:0) + N-acetyl-alpha-D-galactosamine. The enzyme catalyses a globoside IV3GalNAc-Gb4Cer + H2O = N-acetyl-alpha-D-galactosamine + a globoside Gb4Cer. In terms of biological role, removes terminal alpha-N-acetylgalactosamine residues from glycolipids and glycopeptides. Required for the breakdown of glycolipids. The protein is Alpha-N-acetylgalactosaminidase (NAGA) of Gallus gallus (Chicken).